The chain runs to 154 residues: Small ribosomal subunit protein uS9 (154 aa).

The interval 133-154 (RAKESKKYGLKKARKAPQYSKR) is disordered. Residues 140 to 154 (YGLKKARKAPQYSKR) show a composition bias toward basic residues.

This sequence belongs to the universal ribosomal protein uS9 family.

This chain is Small ribosomal subunit protein uS9, found in Salinispora tropica (strain ATCC BAA-916 / DSM 44818 / JCM 13857 / NBRC 105044 / CNB-440).